Reading from the N-terminus, the 140-residue chain is Cytochrome c-type biogenesis protein CcmE (140 aa).

The Cytoplasmic segment spans residues 1-7 (MKRKHKR). Residues 8–28 (LLFVLASFCAAGCALLFILSE) traverse the membrane as a helical; Signal-anchor for type II membrane protein segment. Topologically, residues 29-140 (LRESVSFFYT…TAPKSSPEPK (112 aa)) are periplasmic. The heme site is built by H121 and Y125.

Belongs to the CcmE/CycJ family.

The protein localises to the cell inner membrane. Heme chaperone required for the biogenesis of c-type cytochromes. Transiently binds heme delivered by CcmC and transfers the heme to apo-cytochromes in a process facilitated by CcmF and CcmH. This is Cytochrome c-type biogenesis protein CcmE from Anaplasma marginale (strain St. Maries).